We begin with the raw amino-acid sequence, 154 residues long: Ubiquitin-conjugating enzyme E2 L5 (154 aa).

The UBC core domain maps to 2-149 (AASRRLMKEL…AEEFTKKYGE (148 aa)). C86 acts as the Glycyl thioester intermediate in catalysis.

The protein belongs to the ubiquitin-conjugating enzyme family.

It carries out the reaction S-ubiquitinyl-[E1 ubiquitin-activating enzyme]-L-cysteine + [E2 ubiquitin-conjugating enzyme]-L-cysteine = [E1 ubiquitin-activating enzyme]-L-cysteine + S-ubiquitinyl-[E2 ubiquitin-conjugating enzyme]-L-cysteine.. It participates in protein modification; protein ubiquitination. Catalyzes the covalent attachment of ubiquitin to other proteins. The chain is Ubiquitin-conjugating enzyme E2 L5 from Homo sapiens (Human).